Consider the following 1393-residue polypeptide: MFGEGSRDNVALSKEGLFDKLEIGIASDITIRDKWSCGEIKKPETINYRTFKPEKGGLFCEKIFGPTKDWECCCGKYKKIKHKGIVCDRCGVEVTLSKVRRERMAHIELAVLIVHIWFFKTTPSRIGNVLGMTASDLERIIYYEEYVVIDPGKTDLNKKQLLNDAQYREVIEKWGKDSFVAKMGGEAIYDLLKSEDLQSLLKELKDRLRKTKSQQARMKLAKRLKIIEGFVSSSNHAEWMVLKSVPVVPPDLRPLVPLDGGRFATSDLNDLYRRVINRNNRLKAILRLKTPEVIVRNEKRMLQEAVDALFDNGRHGHPVMGAGNRPLKSLSEMLKGKNGRFRQNLLGKRVDYSGRSVIIVGPELKFNQCGLPKEMALELFEPFIIKRLKDQGSVYTIRSAKKMIQRGAPEVWDVLEEIIKGHPVLLNRAPTLHRLGIQAFEPVLIEGKAIRVHPLVCAAFNADFDGDQMAVHVPLSIEAQLEAKVLMMAPDNIFLPSSGKPVATPSKDMTLGIYYLMADPTYFPEDHGGKIKIFKDVTEVLRALYSGGFLDEHTDGRRDETGRGIHIHEKIKVRIDGQVIETTPGRVLFNRIVPKELGFQNYSMPSKRISELILQCYKKVGLEATVRFLDDLKDLGFIQATKAAISMGLKDVKIPEIKSEILKEAYDKVAIVKKQYDDGIITDGERHSKTISIWTEVSELLSDALYVEISKQTKSKHNPLFLMIDSGARGNKSQLKQLGALRGLMAKPNGAIIESPITSNFREGLTVLEYSISSHGARKGLADTALKTADSGYLTRRLVDVAQDVIITEKDCGTLNHIEITAIRQGSEELLPLKDRIYGRTVSEDIYQPGDKSKLLAENGDVITSAQAELIDDAGIESIKIRSTLTCESRRGVCAKCYGLNLANGRLIGLGEAVGIIAAQSIGEPGTQLTMRTFHLGGIAATSSTPEIVTNCDGILVYIDLRVVVGQDGNHLVLNKKGAIHVVRDEGRSLEEYKKLLSTKSIESLETYPVELGVKILVGDGEKVTAGQRIAEVELHNIPIICDKPGFVKYEDLVEGISTEKVANKNTGLVELIVKQHRGELHPQIAIYSDPGLTELVGTYAIPSGAIVSVEENQKVDPGMLLARLPRGAIKTKDITGGLPRVAELVEARKPEDAADIAKIDGVVDFKGIQKNKRILVVRDEITGMEEEHLIPLTKHLIVQRGDHVMKGQQLTDGLVVPHEILEICGVRELQKYLVNEVQEVYRLQGVDINDKHVEIIVRQMLQKVRITDPGDTTLLFGEEVNKKEFYEENKRTEEEGGKPAQAVPVLLGITKASLGTESFISAASFQDTTRVLTDAACSSKTDYLLGFKENVIMGHMIPGGTGFDTHKRIKQYLEKEQEELVFDFVSESECAC.

Zn(2+)-binding residues include Cys-72, Cys-74, Cys-87, and Cys-90. The Mg(2+) site is built by Asp-463, Asp-465, and Asp-467. Zn(2+) contacts are provided by Cys-812, Cys-887, Cys-894, and Cys-897.

It belongs to the RNA polymerase beta' chain family. As to quaternary structure, the RNAP catalytic core consists of 2 alpha, 1 beta, 1 beta' and 1 omega subunit. When a sigma factor is associated with the core the holoenzyme is formed, which can initiate transcription. Mg(2+) serves as cofactor. Zn(2+) is required as a cofactor.

It catalyses the reaction RNA(n) + a ribonucleoside 5'-triphosphate = RNA(n+1) + diphosphate. DNA-dependent RNA polymerase catalyzes the transcription of DNA into RNA using the four ribonucleoside triphosphates as substrates. The sequence is that of DNA-directed RNA polymerase subunit beta' from Chlamydia abortus (strain DSM 27085 / S26/3) (Chlamydophila abortus).